Here is a 75-residue protein sequence, read N- to C-terminus: Putative membrane protein insertion efficiency factor (75 aa).

The protein belongs to the UPF0161 family.

It is found in the cell membrane. Could be involved in insertion of integral membrane proteins into the membrane. The sequence is that of Putative membrane protein insertion efficiency factor from Bacillus cytotoxicus (strain DSM 22905 / CIP 110041 / 391-98 / NVH 391-98).